A 109-amino-acid chain; its full sequence is Small ribosomal subunit protein uS10 (109 aa).

The protein belongs to the universal ribosomal protein uS10 family. Part of the 30S ribosomal subunit.

Functionally, involved in the binding of tRNA to the ribosomes. The polypeptide is Small ribosomal subunit protein uS10 (Koribacter versatilis (strain Ellin345)).